The chain runs to 353 residues: H(2)-forming methylenetetrahydromethanopterin dehydrogenase-related protein MJ1338 (353 aa).

It belongs to the HMD family.

This is H(2)-forming methylenetetrahydromethanopterin dehydrogenase-related protein MJ1338 from Methanocaldococcus jannaschii (strain ATCC 43067 / DSM 2661 / JAL-1 / JCM 10045 / NBRC 100440) (Methanococcus jannaschii).